We begin with the raw amino-acid sequence, 359 residues long: Insulin gene enhancer protein ISL-2 (359 aa).

2 consecutive LIM zinc-binding domains span residues 25-86 (AMCV…RLFG) and 87-149 (IKCA…LLER). The interval 151 to 191 (AAGSPRSPGPLPGARGLHLPDAGSGRQPALRPHVHKQTEKT) is disordered. Residues Ser154 and Ser157 each carry the phosphoserine modification. The segment at residues 191-250 (TTRVRTVLNEKQLHTLRTCYAANPRPDALMKEQLVEMTGLSPRVIRVWFQNKRCKDKKKS) is a DNA-binding region (homeobox). The interval 272–301 (GTPLVAGSPIRHENAVQGSAVEVQTYQPPW) is LIM-binding domain (LID). Ser279 is subject to Phosphoserine. The segment covering 326–336 (ESGSLGNSSGS) has biased composition (low complexity). Residues 326-359 (ESGSLGNSSGSDVTSLSSQLPDTPNSMVPSPVET) are disordered. Residues 337 to 359 (DVTSLSSQLPDTPNSMVPSPVET) are compositionally biased toward polar residues.

In terms of assembly, interacts with LHX4.

The protein resides in the nucleus. Its function is as follows. Transcriptional factor that defines subclasses of motoneurons that segregate into columns in the spinal cord and select distinct axon pathways. This is Insulin gene enhancer protein ISL-2 (ISL2) from Homo sapiens (Human).